We begin with the raw amino-acid sequence, 274 residues long: Nitrogenase iron protein (274 aa).

Position 8-15 (8-15 (GKGGIGKS)) interacts with ATP. A [4Fe-4S] cluster-binding site is contributed by C94. At R97 the chain carries ADP-ribosylarginine; by dinitrogenase reductase ADP-ribosyltransferase. C131 serves as a coordination point for [4Fe-4S] cluster.

Belongs to the NifH/BchL/ChlL family. Homodimer. [4Fe-4S] cluster serves as cofactor. The reversible ADP-ribosylation of Arg-97 inactivates the nitrogenase reductase and regulates nitrogenase activity.

It catalyses the reaction N2 + 8 reduced [2Fe-2S]-[ferredoxin] + 16 ATP + 16 H2O = H2 + 8 oxidized [2Fe-2S]-[ferredoxin] + 2 NH4(+) + 16 ADP + 16 phosphate + 6 H(+). In terms of biological role, the key enzymatic reactions in nitrogen fixation are catalyzed by the nitrogenase complex, which has 2 components: the iron protein and the molybdenum-iron protein. The chain is Nitrogenase iron protein from Chlorobium limicola (strain DSM 245 / NBRC 103803 / 6330).